The chain runs to 271 residues: Formamidopyrimidine-DNA glycosylase (271 aa).

The Schiff-base intermediate with DNA role is filled by Pro-2. Residue Glu-3 is the Proton donor of the active site. The active-site Proton donor; for beta-elimination activity is Lys-58. Residues His-91, Arg-110, and Arg-152 each contribute to the DNA site. The FPG-type zinc-finger motif lies at Gln-237–His-271. Arg-261 (proton donor; for delta-elimination activity) is an active-site residue.

Belongs to the FPG family. As to quaternary structure, monomer. Requires Zn(2+) as cofactor.

The enzyme catalyses Hydrolysis of DNA containing ring-opened 7-methylguanine residues, releasing 2,6-diamino-4-hydroxy-5-(N-methyl)formamidopyrimidine.. It catalyses the reaction 2'-deoxyribonucleotide-(2'-deoxyribose 5'-phosphate)-2'-deoxyribonucleotide-DNA = a 3'-end 2'-deoxyribonucleotide-(2,3-dehydro-2,3-deoxyribose 5'-phosphate)-DNA + a 5'-end 5'-phospho-2'-deoxyribonucleoside-DNA + H(+). In terms of biological role, involved in base excision repair of DNA damaged by oxidation or by mutagenic agents. Acts as a DNA glycosylase that recognizes and removes damaged bases. Has a preference for oxidized purines, such as 7,8-dihydro-8-oxoguanine (8-oxoG). Has AP (apurinic/apyrimidinic) lyase activity and introduces nicks in the DNA strand. Cleaves the DNA backbone by beta-delta elimination to generate a single-strand break at the site of the removed base with both 3'- and 5'-phosphates. The sequence is that of Formamidopyrimidine-DNA glycosylase from Nitrosococcus oceani (strain ATCC 19707 / BCRC 17464 / JCM 30415 / NCIMB 11848 / C-107).